Reading from the N-terminus, the 42-residue chain is IDYRKCQASQILKEHGMDKVIPLPELVCTMFHISGLSPQAEV.

Residues 1–42 (IDYRKCQASQILKEHGMDKVIPLPELVCTMFHISGLSPQAEV) enclose the C-type lysozyme domain.

The protein belongs to the glycosyl hydrolase 22 family. As to quaternary structure, lactose synthase (LS) is a heterodimer of a catalytic component, beta1,4-galactosyltransferase (beta4Gal-T1) and a regulatory component, alpha-lactalbumin (LA). In terms of tissue distribution, mammary gland specific. Secreted in milk.

Its subcellular location is the secreted. Regulatory subunit of lactose synthase, changes the substrate specificity of galactosyltransferase in the mammary gland making glucose a good acceptor substrate for this enzyme. This enables LS to synthesize lactose, the major carbohydrate component of milk. In other tissues, galactosyltransferase transfers galactose onto the N-acetylglucosamine of the oligosaccharide chains in glycoproteins. The protein is Alpha-lactalbumin I (LALBA) of Macropus giganteus (Eastern gray kangaroo).